We begin with the raw amino-acid sequence, 145 residues long: Putative pre-16S rRNA nuclease (145 aa).

This sequence belongs to the YqgF nuclease family.

It is found in the cytoplasm. Could be a nuclease involved in processing of the 5'-end of pre-16S rRNA. The chain is Putative pre-16S rRNA nuclease from Pseudomonas fluorescens (strain ATCC BAA-477 / NRRL B-23932 / Pf-5).